Here is a 220-residue protein sequence, read N- to C-terminus: Peritrophin-55 (220 aa).

Residues 1 to 19 (MKSVFVCTLVLALAHHAFA) form the signal peptide. N-linked (GlcNAc...) asparagine glycosylation occurs at Asn29. The Chitin-binding type-2 domain occupies 33–95 (ITPCLGNDII…NFIPAPTCEY (63 aa)). Cys68 and Cys84 are joined by a disulfide. Residues 116-165 (TTLKTTPSKTTPIVTTAPPSTPVPSTIVTNKPDPTTPKTTKPPKVTTTVN) are compositionally biased toward low complexity. Residues 116–220 (TTLKTTPSKT…TPPSIVQLQN (105 aa)) are disordered. The span at 197–210 (PTPPGMPPTPPSFG) shows a compositional bias: pro residues.

Post-translationally, glycosylated. As to expression, larval peritrophic membrane.

Its function is as follows. May bind oligosaccharide structures. The chain is Peritrophin-55 from Lucilia cuprina (Green bottle fly).